Reading from the N-terminus, the 178-residue chain is Large ribosomal subunit protein uL6 (178 aa).

The protein belongs to the universal ribosomal protein uL6 family. Part of the 50S ribosomal subunit.

In terms of biological role, this protein binds to the 23S rRNA, and is important in its secondary structure. It is located near the subunit interface in the base of the L7/L12 stalk, and near the tRNA binding site of the peptidyltransferase center. The sequence is that of Large ribosomal subunit protein uL6 from Streptococcus pneumoniae (strain ATCC 700669 / Spain 23F-1).